A 151-amino-acid chain; its full sequence is Deoxyuridine 5'-triphosphate nucleotidohydrolase (151 aa).

Residues Arg-71–Gly-73, Asn-84, and Thr-88–Asp-90 each bind substrate.

This sequence belongs to the dUTPase family. Mg(2+) is required as a cofactor.

The catalysed reaction is dUTP + H2O = dUMP + diphosphate + H(+). The protein operates within pyrimidine metabolism; dUMP biosynthesis; dUMP from dCTP (dUTP route): step 2/2. Its function is as follows. This enzyme is involved in nucleotide metabolism: it produces dUMP, the immediate precursor of thymidine nucleotides and it decreases the intracellular concentration of dUTP so that uracil cannot be incorporated into DNA. The sequence is that of Deoxyuridine 5'-triphosphate nucleotidohydrolase from Gluconobacter oxydans (strain 621H) (Gluconobacter suboxydans).